The following is a 506-amino-acid chain: Maturase K (506 aa).

Belongs to the intron maturase 2 family. MatK subfamily.

The protein resides in the plastid. It localises to the chloroplast. Usually encoded in the trnK tRNA gene intron. Probably assists in splicing its own and other chloroplast group II introns. In Rhododendron tsusiophyllum (Rhododendron), this protein is Maturase K.